A 1114-amino-acid polypeptide reads, in one-letter code: TBC1 domain family member 8B (1114 aa).

2 consecutive GRAM domains span residues 145-212 and 285-353; these read LKFE…EKTS and EQFK…DKTD. Polar residues predominate over residues 399–411; the sequence is TEVAVSSDSTGPS. The segment at 399 to 420 is disordered; the sequence is TEVAVSSDSTGPSENFEEQPLT. Residues 486–673 form the Rab-GAP TBC domain; it reads GIPETLRGEL…NVVDCFFYDG (188 aa). The EF-hand domain occupies 857-892; sequence NRDSLALWTFRLLDENSDCLINFKEFSSAIDIMYNG. Disordered stretches follow at residues 938–957 and 1032–1061; these read SKPADEKETESGRNSPEKGK and LHSPASSASTARDSGPSEGNAESSVKKDLP. A compositionally biased stretch (basic and acidic residues) spans 940–957; sequence PADEKETESGRNSPEKGK.

As to quaternary structure, interacts (via domain Rab-GAP TBC) with RAB11B (in GTP-bound form).

It is found in the cytoplasm. It localises to the cytosol. Involved in vesicular recycling, probably as a RAB11B GTPase-activating protein. In Mus musculus (Mouse), this protein is TBC1 domain family member 8B (Tbc1d8b).